The chain runs to 98 residues: NADH-ubiquinone oxidoreductase chain 4L (98 aa).

The next 3 helical transmembrane spans lie at 1–21, 26–46, and 61–81; these read MSPI…GMLV, LMAS…TIAL, and ITLL…LVSI.

This sequence belongs to the complex I subunit 4L family. As to quaternary structure, core subunit of respiratory chain NADH dehydrogenase (Complex I) which is composed of 45 different subunits.

It localises to the mitochondrion inner membrane. The enzyme catalyses a ubiquinone + NADH + 5 H(+)(in) = a ubiquinol + NAD(+) + 4 H(+)(out). Functionally, core subunit of the mitochondrial membrane respiratory chain NADH dehydrogenase (Complex I) which catalyzes electron transfer from NADH through the respiratory chain, using ubiquinone as an electron acceptor. Part of the enzyme membrane arm which is embedded in the lipid bilayer and involved in proton translocation. In Chlorocebus aethiops (Green monkey), this protein is NADH-ubiquinone oxidoreductase chain 4L (MT-ND4L).